Reading from the N-terminus, the 719-residue chain is Photosystem I P700 chlorophyll a apoprotein A1 (719 aa).

The next 8 helical transmembrane spans lie at 60–83 (IFSAHFGQLSIIFIWLSGMYFHGA), 146–169 (LYCTAIGALIFAGLMLFAGWFHYH), 185–209 (LNHHLAGLLGLGSLGWAGHQVHVSL), 281–299 (TAHHHIAIAVLFLIAGHMY), 336–359 (WHAQLAVNLAMLGSLTIIVAHHMY), 375–401 (LSLFTHHMWIGGFLVVGAAAHAAIFMV), 423–445 (AIISHLNWVCIFLGFHSFGLYIH), and 521–539 (FLVHHIHAFTIHVTVLILL). The [4Fe-4S] cluster site is built by Cys-563 and Cys-572. The next 2 membrane-spanning stretches (helical) occupy residues 579 to 600 (HVFLGLFWMYNSISVVIFHFSW) and 654 to 676 (LSAYGLLFLGAHFVWAFSLMFLF). Position 665 (His-665) interacts with chlorophyll a'. Chlorophyll a is bound by residues Met-673 and Tyr-681. Trp-682 contributes to the phylloquinone binding site. A helical transmembrane segment spans residues 714-719 (AVGVAH).

This sequence belongs to the PsaA/PsaB family. As to quaternary structure, the PsaA/B heterodimer binds the P700 chlorophyll special pair and subsequent electron acceptors. PSI consists of a core antenna complex that captures photons, and an electron transfer chain that converts photonic excitation into a charge separation. The eukaryotic PSI reaction center is composed of at least 11 subunits. P700 is a chlorophyll a/chlorophyll a' dimer, A0 is one or more chlorophyll a, A1 is one or both phylloquinones and FX is a shared 4Fe-4S iron-sulfur center. serves as cofactor.

Its subcellular location is the plastid. The protein localises to the chloroplast thylakoid membrane. It carries out the reaction reduced [plastocyanin] + hnu + oxidized [2Fe-2S]-[ferredoxin] = oxidized [plastocyanin] + reduced [2Fe-2S]-[ferredoxin]. Its function is as follows. PsaA and PsaB bind P700, the primary electron donor of photosystem I (PSI), as well as the electron acceptors A0, A1 and FX. PSI is a plastocyanin-ferredoxin oxidoreductase, converting photonic excitation into a charge separation, which transfers an electron from the donor P700 chlorophyll pair to the spectroscopically characterized acceptors A0, A1, FX, FA and FB in turn. Oxidized P700 is reduced on the lumenal side of the thylakoid membrane by plastocyanin. The sequence is that of Photosystem I P700 chlorophyll a apoprotein A1 from Equisetum palustre (Marsh horsetail).